Here is a 216-residue protein sequence, read N- to C-terminus: Nudix hydrolase 26, chloroplastic (216 aa).

The transit peptide at methionine 1–cysteine 53 directs the protein to the chloroplast. Residues glycine 62–serine 209 form the Nudix hydrolase domain. Residues glycine 95–glycine 116 carry the Nudix box motif. Mn(2+) is bound by residues glutamate 110 and glutamate 114.

The protein belongs to the Nudix hydrolase family. Mg(2+) is required as a cofactor. It depends on Mn(2+) as a cofactor. Expressed in roots, leaves, stems and inflorescences.

It localises to the plastid. Its subcellular location is the chloroplast. Its function is as follows. Mediates the hydrolysis of some nucleoside diphosphate derivatives. Can use diadenosine 5',5'''-P(1)P(5) pentaphosphate (Ap(5)A), diadenosine 5',5'''-P(1)P(4) tetraphosphate (Ap(4)A) and diadenosine 5',5'''-P(1)P(3) triphosphate (Ap(3)A) as substrates. The chain is Nudix hydrolase 26, chloroplastic (NUDT26) from Arabidopsis thaliana (Mouse-ear cress).